The following is a 310-amino-acid chain: Probable manganese-dependent inorganic pyrophosphatase (310 aa).

Residues His-9, Asp-13, Asp-15, Asp-76, His-98, and Asp-150 each coordinate Mn(2+).

The protein belongs to the PPase class C family. Homodimer. The cofactor is Mn(2+).

Its subcellular location is the cytoplasm. It catalyses the reaction diphosphate + H2O = 2 phosphate + H(+). The sequence is that of Probable manganese-dependent inorganic pyrophosphatase (ppaC) from Streptococcus mutans serotype c (strain ATCC 700610 / UA159).